The chain runs to 245 residues: Ribonuclease 3 (245 aa).

One can recognise an RNase III domain in the interval 17-146; the sequence is FAKKMNELGF…FVGALYLDQG (130 aa). Glutamate 59 contributes to the Mg(2+) binding site. Residue aspartate 63 is part of the active site. Mg(2+) is bound by residues aspartate 132 and glutamate 135. Residue glutamate 135 is part of the active site. The DRBM domain maps to 172–241; that stretch reads DFKTQFQEYV…AESAYSKLKS (70 aa). The interval 217–245 is disordered; that stretch reads ATGQGKTKKESEQKAAESAYSKLKSNNNL.

The protein belongs to the ribonuclease III family. In terms of assembly, homodimer. It depends on Mg(2+) as a cofactor.

The protein resides in the cytoplasm. The catalysed reaction is Endonucleolytic cleavage to 5'-phosphomonoester.. Its function is as follows. Digests double-stranded RNA. Involved in the processing of primary rRNA transcript to yield the immediate precursors to the large and small rRNAs (23S and 16S). Processes some mRNAs, and tRNAs when they are encoded in the rRNA operon. Processes pre-crRNA and tracrRNA of type II CRISPR loci if present in the organism. The polypeptide is Ribonuclease 3 (Staphylococcus haemolyticus (strain JCSC1435)).